Consider the following 449-residue polypeptide: UDP-N-acetylmuramate--L-alanine ligase (449 aa).

Residue Gly-121–Ser-127 coordinates ATP.

It belongs to the MurCDEF family.

It is found in the cytoplasm. The catalysed reaction is UDP-N-acetyl-alpha-D-muramate + L-alanine + ATP = UDP-N-acetyl-alpha-D-muramoyl-L-alanine + ADP + phosphate + H(+). It functions in the pathway cell wall biogenesis; peptidoglycan biosynthesis. Cell wall formation. This is UDP-N-acetylmuramate--L-alanine ligase from Helicobacter pylori (strain P12).